The primary structure comprises 448 residues: Probable glycine dehydrogenase (decarboxylating) subunit 1 (448 aa).

This sequence belongs to the GcvP family. N-terminal subunit subfamily. In terms of assembly, the glycine cleavage system is composed of four proteins: P, T, L and H. In this organism, the P 'protein' is a heterodimer of two subunits.

The enzyme catalyses N(6)-[(R)-lipoyl]-L-lysyl-[glycine-cleavage complex H protein] + glycine + H(+) = N(6)-[(R)-S(8)-aminomethyldihydrolipoyl]-L-lysyl-[glycine-cleavage complex H protein] + CO2. Its function is as follows. The glycine cleavage system catalyzes the degradation of glycine. The P protein binds the alpha-amino group of glycine through its pyridoxal phosphate cofactor; CO(2) is released and the remaining methylamine moiety is then transferred to the lipoamide cofactor of the H protein. The chain is Probable glycine dehydrogenase (decarboxylating) subunit 1 from Shouchella clausii (strain KSM-K16) (Alkalihalobacillus clausii).